Reading from the N-terminus, the 251-residue chain is 5-oxoprolinase subunit A (251 aa).

The protein belongs to the LamB/PxpA family. In terms of assembly, forms a complex composed of PxpA, PxpB and PxpC.

The catalysed reaction is 5-oxo-L-proline + ATP + 2 H2O = L-glutamate + ADP + phosphate + H(+). In terms of biological role, catalyzes the cleavage of 5-oxoproline to form L-glutamate coupled to the hydrolysis of ATP to ADP and inorganic phosphate. The sequence is that of 5-oxoprolinase subunit A from Vibrio campbellii (strain ATCC BAA-1116).